Here is a 642-residue protein sequence, read N- to C-terminus: A-kinase anchor protein 8-like (642 aa).

Residues 1-269 (MSYTGFVQGS…MRRTWKTWTT (269 aa)) are sufficient for activation of CTE-mediated expression. Asymmetric dimethylarginine; alternate is present on Arg-209. Arg-209 carries the post-translational modification Omega-N-methylarginine; alternate. Residues Arg-218, Arg-238, and Arg-248 each carry the omega-N-methylarginine modification. Lys-258 is subject to N6-acetyllysine. A disordered region spans residues 265-382 (KTWTTADFRT…QDKQKKRQRD (118 aa)). At Thr-268 the chain carries Phosphothreonine. Positions 275–280 (KKKKRK) match the Nuclear localization signal motif. Residues 281 to 297 (QGGSPDEPDSKATRTDC) carry the Nuclear export signal (NES) motif. The residue at position 284 (Ser-284) is a Phosphoserine. Residues 288 to 297 (PDSKATRTDC) are compositionally biased toward basic and acidic residues. At Thr-293 the chain carries Phosphothreonine. Ser-298 is modified (phosphoserine). Positions 299–315 (DNSDSDNDEGTEGEAAE) are enriched in acidic residues. A compositionally biased stretch (basic and acidic residues) spans 338–350 (EDGREEGKEDPEK). The short motif at 363–365 (KRK) is the Nuclear localization signal element. 2 consecutive C2H2 AKAP95-type zinc fingers follow at residues 392–414 (CSLCKYRTFYEDEMGSHLDSKFH) and 485–508 (CAACDLFIPMQFGIIQKHLKTMDH). A disordered region spans residues 546–642 (GENPFTDNPE…EDDEEGGGGP (97 aa)). The segment covering 553–564 (NPEEEKEQDEVE) has biased composition (acidic residues). The segment covering 585 to 605 (AQPPVPLEPAPGTTTPPPPPP) has biased composition (pro residues). Residues 631 to 642 (DMEDDEEGGGGP) are compositionally biased toward acidic residues.

The protein belongs to the AKAP95 family. Interacts (via N-terminus) with DHX9 (via RGG region). Interacts with TMPO isoform Beta, PRPF40A, RNF43, lamin-B. Interacts with HDAC3; increased during mitosis. Phosphorylated on serine or threonine residues possibly by PKA.

The protein resides in the nucleus. Its subcellular location is the nucleus matrix. The protein localises to the nucleus speckle. It localises to the PML body. It is found in the cytoplasm. In terms of biological role, could play a role in constitutive transport element (CTE)-mediated gene expression by association with DHX9. Increases CTE-dependent nuclear unspliced mRNA export. Proposed to target PRKACA to the nucleus but does not seem to be implicated in the binding of regulatory subunit II of PKA. May be involved in nuclear envelope breakdown and chromatin condensation. May be involved in anchoring nuclear membranes to chromatin in interphase and in releasing membranes from chromating at mitosis. May regulate the initiation phase of DNA replication when associated with TMPO isoform Beta. Required for cell cycle G2/M transition and histone deacetylation during mitosis. In mitotic cells recruits HDAC3 to the vicinity of chromatin leading to deacetylation and subsequent phosphorylation at 'Ser-10' of histone H3; in this function seems to act redundantly with AKAP8. May be involved in regulation of pre-mRNA splicing. The polypeptide is A-kinase anchor protein 8-like (Akap8l) (Mus musculus (Mouse)).